The chain runs to 369 residues: Putative esterase slr0264 (369 aa).

Catalysis depends on charge relay system residues Ser162, Asp303, and His334.

The protein belongs to the AB hydrolase superfamily. AB hydrolase 4 family.

This chain is Putative esterase slr0264, found in Synechocystis sp. (strain ATCC 27184 / PCC 6803 / Kazusa).